Here is a 165-residue protein sequence, read N- to C-terminus: Small ribosomal subunit protein uS5 (165 aa).

The 64-residue stretch at 10–73 folds into the S5 DRBM domain; sequence LKEKVVSISR…EDAKKNLVEV (64 aa).

The protein belongs to the universal ribosomal protein uS5 family. Part of the 30S ribosomal subunit. Contacts proteins S4 and S8.

In terms of biological role, with S4 and S12 plays an important role in translational accuracy. Its function is as follows. Located at the back of the 30S subunit body where it stabilizes the conformation of the head with respect to the body. The sequence is that of Small ribosomal subunit protein uS5 from Clostridium perfringens (strain ATCC 13124 / DSM 756 / JCM 1290 / NCIMB 6125 / NCTC 8237 / Type A).